The chain runs to 343 residues: NADH-quinone oxidoreductase subunit H (343 aa).

The next 8 membrane-spanning stretches (helical) occupy residues 19–39 (VAWTLVKIMALVVPLMLGVAY), 89–109 (ALFILGPILAIAPALAAWAVI), 124–144 (LLYVMAITSMGVYGVIIAGWA), 158–178 (AAQIVSYEIAMGFALVGVLMA), 198–218 (WYLWPLFPLFVVYLVAGVAET), 257–277 (ILVAALTTLMFLGGWLSPVAF), 279–299 (PDGIVWWLLKTGFVLFLFLWF), and 314–334 (LGWKVFIPITIVWIVFVGGMM).

This sequence belongs to the complex I subunit 1 family. NDH-1 is composed of 14 different subunits. Subunits NuoA, H, J, K, L, M, N constitute the membrane sector of the complex.

The protein localises to the cell inner membrane. It carries out the reaction a quinone + NADH + 5 H(+)(in) = a quinol + NAD(+) + 4 H(+)(out). In terms of biological role, NDH-1 shuttles electrons from NADH, via FMN and iron-sulfur (Fe-S) centers, to quinones in the respiratory chain. The immediate electron acceptor for the enzyme in this species is believed to be ubiquinone. Couples the redox reaction to proton translocation (for every two electrons transferred, four hydrogen ions are translocated across the cytoplasmic membrane), and thus conserves the redox energy in a proton gradient. This subunit may bind ubiquinone. The sequence is that of NADH-quinone oxidoreductase subunit H from Thiobacillus denitrificans (strain ATCC 25259 / T1).